The primary structure comprises 348 residues: D-alanine--D-alanine ligase (348 aa).

Residues 132–334 enclose the ATP-grasp domain; the sequence is KRILEVAGVP…YSDLIKELVV (203 aa). 162–217 lines the ATP pocket; the sequence is LEKLTFPVFVKPANMGSSVGISKAENESELRSAIDLALKYDSRILIEQGVVAREIE. The Mg(2+) site is built by Asp288, Glu301, and Asn303.

This sequence belongs to the D-alanine--D-alanine ligase family. Mg(2+) serves as cofactor. Mn(2+) is required as a cofactor.

The protein resides in the cytoplasm. The catalysed reaction is 2 D-alanine + ATP = D-alanyl-D-alanine + ADP + phosphate + H(+). The protein operates within cell wall biogenesis; peptidoglycan biosynthesis. Functionally, cell wall formation. The chain is D-alanine--D-alanine ligase from Streptococcus thermophilus (strain ATCC BAA-250 / LMG 18311).